The primary structure comprises 588 residues: Zeta-carotene desaturase, chloroplastic/chromoplastic (588 aa).

This sequence belongs to the zeta carotene desaturase family. The cofactor is NAD(+). NADP(+) serves as cofactor. FAD is required as a cofactor.

Its subcellular location is the plastid. The protein localises to the chloroplast. It localises to the chromoplast. The catalysed reaction is 9,9'-di-cis-zeta-carotene + 2 a quinone = 7,7',9,9'-tetra-cis-lycopene + 2 a quinol. Its pathway is carotenoid biosynthesis; lycopene biosynthesis. Functionally, catalyzes the conversion of zeta-carotene to lycopene via the intermediary of neurosporene. It carries out two consecutive desaturations (introduction of double bonds) at positions C-7 and C-7'. This chain is Zeta-carotene desaturase, chloroplastic/chromoplastic (ZDS), found in Solanum lycopersicum (Tomato).